The sequence spans 422 residues: Glutamyl-tRNA reductase (422 aa).

Residues 48–51, S100, 105–107, and Q111 contribute to the substrate site; these read TCNR and EDQ. Residue C49 is the Nucleophile of the active site. Position 180-185 (180-185) interacts with NADP(+); that stretch reads GTGEMG.

Belongs to the glutamyl-tRNA reductase family. As to quaternary structure, homodimer.

It carries out the reaction (S)-4-amino-5-oxopentanoate + tRNA(Glu) + NADP(+) = L-glutamyl-tRNA(Glu) + NADPH + H(+). Its pathway is porphyrin-containing compound metabolism; protoporphyrin-IX biosynthesis; 5-aminolevulinate from L-glutamyl-tRNA(Glu): step 1/2. Its function is as follows. Catalyzes the NADPH-dependent reduction of glutamyl-tRNA(Glu) to glutamate 1-semialdehyde (GSA). The chain is Glutamyl-tRNA reductase from Methanococcoides burtonii (strain DSM 6242 / NBRC 107633 / OCM 468 / ACE-M).